A 310-amino-acid polypeptide reads, in one-letter code: Porphobilinogen deaminase (310 aa).

C242 bears the S-(dipyrrolylmethanemethyl)cysteine mark.

It belongs to the HMBS family. Monomer. Dipyrromethane is required as a cofactor.

The catalysed reaction is 4 porphobilinogen + H2O = hydroxymethylbilane + 4 NH4(+). It participates in porphyrin-containing compound metabolism; protoporphyrin-IX biosynthesis; coproporphyrinogen-III from 5-aminolevulinate: step 2/4. Its function is as follows. Tetrapolymerization of the monopyrrole PBG into the hydroxymethylbilane pre-uroporphyrinogen in several discrete steps. The sequence is that of Porphobilinogen deaminase from Alcanivorax borkumensis (strain ATCC 700651 / DSM 11573 / NCIMB 13689 / SK2).